The following is a 317-amino-acid chain: Melanocyte-stimulating hormone receptor (317 aa).

Over Met1 to Glu37 the chain is Extracellular. N-linked (GlcNAc...) asparagine glycosylation occurs at Asn29. The helical transmembrane segment at Val38 to Ile63 threads the bilayer. Topologically, residues Ala64–Pro72 are cytoplasmic. The helical transmembrane segment at Met73–Leu93 threads the bilayer. At Glu94–Asn118 the chain is on the extracellular side. Residues Val119–Val140 form a helical membrane-spanning segment. Over Asp141–Arg163 the chain is Cytoplasmic. The helical transmembrane segment at Ala164–Cys183 threads the bilayer. Residues Asp184–Cys191 lie on the Extracellular side of the membrane. The chain crosses the membrane as a helical span at residues Leu192–Leu211. Residues Ala212–Ala240 lie on the Cytoplasmic side of the membrane. A helical transmembrane segment spans residues Val241–Leu266. The Extracellular segment spans residues Cys267 to Asn279. Residues Phe280–Phe300 traverse the membrane as a helical segment. Residues His301 to Trp317 are Cytoplasmic-facing. Cys315 carries S-palmitoyl cysteine lipidation.

This sequence belongs to the G-protein coupled receptor 1 family. Interacts with MGRN1, but does not undergo MGRN1-mediated ubiquitination; this interaction competes with GNAS-binding and thus inhibits agonist-induced cAMP production. Interacts with OPN3; the interaction results in a decrease in MC1R-mediated cAMP signaling and ultimately a decrease in melanin production in melanocytes.

The protein localises to the cell membrane. Its function is as follows. Receptor for MSH (alpha, beta and gamma) and ACTH. The activity of this receptor is mediated by G proteins which activate adenylate cyclase. Mediates melanogenesis, the production of eumelanin (black/brown) and phaeomelanin (red/yellow), via regulation of cAMP signaling in melanocytes. This is Melanocyte-stimulating hormone receptor (MC1R) from Pan troglodytes (Chimpanzee).